The primary structure comprises 340 residues: L-lysine 2,3-aminomutase (340 aa).

The Radical SAM core domain maps to 106–321; that stretch reads RKYNNRILLL…SMISGFLVPK (216 aa). Cys-120, Cys-124, and Cys-127 together coordinate [4Fe-4S] cluster. Lys-332 carries the post-translational modification N6-(pyridoxal phosphate)lysine.

It belongs to the radical SAM superfamily. KamA family. [4Fe-4S] cluster serves as cofactor. Requires pyridoxal 5'-phosphate as cofactor.

It carries out the reaction L-lysine = D-beta-lysine. Functionally, with EpmA is involved in the beta-lysylation step of the post-translational modification of translation elongation factor P (EF-P) on 'Lys-34'. EpmB appears to act before EpmA. Displays lysine 2,3-aminomutase activity, producing (R)-beta-lysine from (S)-alpha-lysine (L-lysine). The polypeptide is L-lysine 2,3-aminomutase (epmB) (Buchnera aphidicola subsp. Baizongia pistaciae (strain Bp)).